A 199-amino-acid polypeptide reads, in one-letter code: Large ribosomal subunit protein mL51 (199 aa).

The N-terminal 15 residues, 1 to 15, are a transit peptide targeting the mitochondrion; that stretch reads MNSNSLSRFTSIVRT.

Belongs to the mitochondrion-specific ribosomal protein mL51 family. In terms of assembly, component of the mitochondrial ribosome large subunit (39S) which comprises a 16S rRNA and about 50 distinct proteins.

It is found in the mitochondrion. This is Large ribosomal subunit protein mL51 (mrpl-51) from Caenorhabditis elegans.